The primary structure comprises 1032 residues: MEEQVANAIEIASNPSADPALKTQAFDFVNQLRSDPSGWQVCLSLFTQTPQRSGIVRHVALEVVNSAAQGGLIDLQALAYVKDGLLAYLRQVYGQDAGASDPPNIQNKIAQTITFLFSALYASGWESFFDDLLGLTQKSPSSTTRDNASGIIFYLRVINSIHDEIGDVLVSRSRNEQDKANALKDLIRQRDMQKITSSWQQILSEWRDGNDVIVEMCLKAVGSWVSWIDIGLVVNQTMLDLLFQQLGRAQKEDLRQGEEKVRDAAVDVFTEIIGKKMKPEDKIDMIIFLNLDTIVSQLSNSPPLHGNRFTFKYDTDLAETVAKLVNITVIDIVRALEQEGVSTECKEKANGLLQAFLPHILRYFSDEYDEVCSTVIPCVSDLLTYLRRIAKVNPALASQHSSILLPILKAIIAKMRYDETSSWGEEDEQTDEAEFQELRKRLGILQQMIASINEQLYMEVVSEMVATTFENLRQSGSQMDWRDLDLALHEMFLFGDLAVKAGSLYTKGNPNNQAAERLIEMMLRMVESDIRSFTHPATQLQYTEICVRYSSFFHHHTHLIPGVLENFLQLVHHPIKKVKTRSWYLFQRLVKQLRQYVGNVAQTVVEALGDLLVIRAELPSEVSEGDEMSSEDHELADAIFNSQLYLFEAVGIICSTPTISPDKQVLYVQAVLNPIFLDMEKNLEAAKSQDERAILQIHHDIMALGTLARGFSDWMPGTNTPATLPAPEVSAAFNQVAEATLVALESLKSSFNVRTAARFAFSRLIGVLGSRILPQLPRWIDGLLTQTSSRDEMALFLRLLDQVIFGFKGEIFSILDTLLTPFLQRVFSGIADPTTGTDDEIQLAELKREYLNFLLAVLNNDLGAVIISERNQPIFETVISTIEHFSKDIDDFTTAKMAFSVLSKMSSSWGGPDVIAEASNGTPPSQAPLPGFGQFMITRFSPLCWALPSTPSFNSKDAQAKQVLAEAGGLQRTIYAKTGMEYLTYLRDRELPGMGMGGELIEEFVGALSRLDLKGFRQFFPVCLSNFHILSI.

The protein belongs to the exportin family.

It localises to the nucleus. It is found in the cytoplasm. Its function is as follows. tRNA nucleus export receptor which facilitates tRNA translocation across the nuclear pore complex. Involved in pre-tRNA splicing, probably by affecting the interaction of pre-tRNA with splicing endonuclease. The protein is Exportin-T (los1) of Aspergillus fumigatus (strain ATCC MYA-4609 / CBS 101355 / FGSC A1100 / Af293) (Neosartorya fumigata).